Reading from the N-terminus, the 397-residue chain is MARGALDWIGAELVALDAKGLRRSLEPIGPAQGPVVRVGGRALVNLCSNDYLGLAADPRVRAAAADAAARFGAGSGAARLVAGDLPPHGALEARLAAWKGREAALLFGSGYHANAGVPGALVGRDDAVFSDVLNHASIVDGCLLSRAELVRYRHCDVEELAGLLARTRARRKLVVTDAIFSMDGDAAPLRELADLCDRHGAMLYVDEAHAAGVLGPGGAGLAEALGVQDRVDVHMGTLGKALGAFGAYVAGERRLVELLLSRARPFVFSTALPPPACAAALAALEVVATEPSRRTRLFALCARMQAGLARLGFDVARVASPIFPVVLGTEARALAAAAALRERGWFVRAIRPPTVPRGTSRLRVALSAAHDEAQVDGFLAALAEVLPGLPPEPRPPA.

Position 23 (R23) interacts with substrate. A pyridoxal 5'-phosphate-binding site is contributed by G110–Y111. H135 is a substrate binding site. Residues S181, H209, and T237 each coordinate pyridoxal 5'-phosphate. K240 carries the post-translational modification N6-(pyridoxal phosphate)lysine. T354 contacts substrate.

The protein belongs to the class-II pyridoxal-phosphate-dependent aminotransferase family. BioF subfamily. As to quaternary structure, homodimer. Pyridoxal 5'-phosphate is required as a cofactor.

The enzyme catalyses 6-carboxyhexanoyl-[ACP] + L-alanine + H(+) = (8S)-8-amino-7-oxononanoate + holo-[ACP] + CO2. The protein operates within cofactor biosynthesis; biotin biosynthesis. In terms of biological role, catalyzes the decarboxylative condensation of pimeloyl-[acyl-carrier protein] and L-alanine to produce 8-amino-7-oxononanoate (AON), [acyl-carrier protein], and carbon dioxide. The sequence is that of 8-amino-7-oxononanoate synthase from Anaeromyxobacter dehalogenans (strain 2CP-C).